The following is a 121-amino-acid chain: MQHYLLDSNQRLNVSFSKDSVAAYYQCFNQPYRKEVPPLMCASLWPKFDLFKKYANSELILTKSAINQTQKIEVDTIYVGHLEDIECRQTRNITRYTMALTLTKNDQHVITVTQTFIKAMK.

The sequence is that of Protein VraC (vraC) from Staphylococcus aureus (strain Mu3 / ATCC 700698).